A 288-amino-acid chain; its full sequence is Glycine--tRNA ligase alpha subunit (288 aa).

The protein belongs to the class-II aminoacyl-tRNA synthetase family. Tetramer of two alpha and two beta subunits.

It is found in the cytoplasm. It carries out the reaction tRNA(Gly) + glycine + ATP = glycyl-tRNA(Gly) + AMP + diphosphate. This chain is Glycine--tRNA ligase alpha subunit, found in Rickettsia africae (strain ESF-5).